We begin with the raw amino-acid sequence, 238 residues long: Pyridoxine 5'-phosphate synthase (238 aa).

Asn7 serves as a coordination point for 3-amino-2-oxopropyl phosphate. 9-10 (DH) serves as a coordination point for 1-deoxy-D-xylulose 5-phosphate. Arg18 contacts 3-amino-2-oxopropyl phosphate. Residue His43 is the Proton acceptor of the active site. Residues Arg45 and His50 each coordinate 1-deoxy-D-xylulose 5-phosphate. Catalysis depends on Glu70, which acts as the Proton acceptor. Residue Thr100 coordinates 1-deoxy-D-xylulose 5-phosphate. Catalysis depends on His190, which acts as the Proton donor. Residues Gly191 and 212-213 (GH) contribute to the 3-amino-2-oxopropyl phosphate site.

The protein belongs to the PNP synthase family. Homooctamer; tetramer of dimers.

Its subcellular location is the cytoplasm. The enzyme catalyses 3-amino-2-oxopropyl phosphate + 1-deoxy-D-xylulose 5-phosphate = pyridoxine 5'-phosphate + phosphate + 2 H2O + H(+). Its pathway is cofactor biosynthesis; pyridoxine 5'-phosphate biosynthesis; pyridoxine 5'-phosphate from D-erythrose 4-phosphate: step 5/5. Catalyzes the complicated ring closure reaction between the two acyclic compounds 1-deoxy-D-xylulose-5-phosphate (DXP) and 3-amino-2-oxopropyl phosphate (1-amino-acetone-3-phosphate or AAP) to form pyridoxine 5'-phosphate (PNP) and inorganic phosphate. This is Pyridoxine 5'-phosphate synthase from Prochlorococcus marinus (strain MIT 9312).